The sequence spans 337 residues: D-alanine--D-alanine ligase (337 aa).

The region spanning 124–330 (KMWFSALGIP…FTEYLSLVIN (207 aa)) is the ATP-grasp domain. 154–209 (ALANWGSIFIKAASQGSSVGCYKVDDSSKVAQVLKDAFGYAPYVVVEKTIKARELE) is a binding site for ATP. 3 residues coordinate Mg(2+): D284, E297, and N299.

Belongs to the D-alanine--D-alanine ligase family. Mg(2+) serves as cofactor. Mn(2+) is required as a cofactor.

The protein localises to the cytoplasm. The enzyme catalyses 2 D-alanine + ATP = D-alanyl-D-alanine + ADP + phosphate + H(+). Its pathway is cell wall biogenesis; peptidoglycan biosynthesis. Its function is as follows. Cell wall formation. This Shewanella sp. (strain W3-18-1) protein is D-alanine--D-alanine ligase.